The sequence spans 379 residues: tRNA-specific 2-thiouridylase MnmA (379 aa).

ATP contacts are provided by residues 9 to 16 (GLSGGVDS) and M35. The segment at 95–97 (NPD) is interaction with target base in tRNA. The active-site Nucleophile is the C100. C100 and C198 are oxidised to a cystine. G124 contacts ATP. Residues 148–150 (KDQ) form an interaction with tRNA region. C198 acts as the Cysteine persulfide intermediate in catalysis. The interaction with tRNA stretch occupies residues 325–326 (RY).

The protein belongs to the MnmA/TRMU family.

The protein resides in the cytoplasm. It carries out the reaction S-sulfanyl-L-cysteinyl-[protein] + uridine(34) in tRNA + AH2 + ATP = 2-thiouridine(34) in tRNA + L-cysteinyl-[protein] + A + AMP + diphosphate + H(+). Its function is as follows. Catalyzes the 2-thiolation of uridine at the wobble position (U34) of tRNA, leading to the formation of s(2)U34. This Acidovorax sp. (strain JS42) protein is tRNA-specific 2-thiouridylase MnmA.